A 262-amino-acid polypeptide reads, in one-letter code: uncharacterized protein (262 aa).

7 helical membrane passes run 42-62 (IAKF…TVLN), 71-91 (IINI…LLYF), 115-135 (IGLA…MELI), 145-165 (VVSY…CCFN), 185-205 (LWAY…YSNH), 206-226 (PLMI…PFMI), and 235-255 (AYPS…NYAI).

It is found in the membrane. This is an uncharacterized protein from Acanthamoeba polyphaga mimivirus (APMV).